Consider the following 375-residue polypeptide: Probable trehalose-phosphate phosphatase 7 (375 aa).

Belongs to the trehalose phosphatase family. Requires a divalent metal cation as cofactor.

The enzyme catalyses alpha,alpha-trehalose 6-phosphate + H2O = alpha,alpha-trehalose + phosphate. It participates in glycan biosynthesis; trehalose biosynthesis. Functionally, removes the phosphate from trehalose 6-phosphate to produce free trehalose. Trehalose accumulation in plant may improve abiotic stress tolerance. The sequence is that of Probable trehalose-phosphate phosphatase 7 (TPP7) from Oryza sativa subsp. japonica (Rice).